The chain runs to 710 residues: Cleavage and polyadenylation factor complex subunit C74.02c (710 aa).

A compositionally biased stretch (polar residues) spans 1–30; that stretch reads MDNWNSVRNVSSDRQTSKTSENPPHTSNEY. 3 disordered regions span residues 1–42, 85–170, and 361–510; these read MDNW…LSPD, ASSN…SDVN, and GPAM…SVSW. A compositionally biased stretch (low complexity) spans 86-108; it reads SSNPSLISSGSSQTGSPSQSLSS. Residues 109-170 show a composition bias toward polar residues; sequence NKEPSSPGIS…EVPSSKSDVN (62 aa). Composition is skewed to low complexity over residues 361-383 and 401-420; these read GPAM…SSNS and LASS…PLTK. Residues 421–430 show a composition bias toward polar residues; it reads QQTNPSTPLS. A compositionally biased stretch (basic and acidic residues) spans 437–447; it reads KGREKEKDKDS.

Component of the cleavage and polyadenylation factor (CPF) complex.

The protein localises to the cytoplasm. The protein resides in the nucleus. In terms of biological role, RNA-binding component of the cleavage and polyadenylation factor (CPF) complex, which plays a key role in polyadenylation-dependent pre-mRNA 3'-end formation. Involved in poly(A) site recognition. May be involved in coupling transcription termination and mRNA 3'-end formation. The chain is Cleavage and polyadenylation factor complex subunit C74.02c from Schizosaccharomyces pombe (strain 972 / ATCC 24843) (Fission yeast).